A 2201-amino-acid chain; its full sequence is Tenascin (2201 aa).

An N-terminal signal peptide occupies residues M1–G22. N38 is a glycosylation site (N-linked (GlcNAc...) asparagine). S65 and S70 each carry phosphoserine. S72 carries the post-translational modification Phosphoserine; by FAM20C. O-linked (Xyl...) (chondroitin sulfate) serine glycosylation is present at S72. Residues D118–G145 are a coiled coil. N-linked (GlcNAc...) asparagine glycans are attached at residues N166 and N184. An EGF-like 1; incomplete domain is found at C174–S186. 14 consecutive EGF-like domains span residues S186 to S217, S217 to S248, S248 to N280, N280 to S311, S311 to G342, G342 to S373, S373 to G404, G404 to S435, S435 to S466, S466 to R497, R497 to A528, A528 to K559, K559 to G590, and G590 to S621. Cystine bridges form between C190/C200, C194/C205, C207/C216, C221/C231, C225/C236, C238/C247, C252/C263, C256/C268, C270/C279, C284/C294, C288/C299, C301/C310, C315/C325, C319/C330, C332/C341, C346/C356, C350/C361, C363/C372, C377/C387, C381/C392, C394/C403, C408/C418, C412/C423, C425/C434, C439/C449, C443/C454, C456/C465, C470/C480, C474/C485, C487/C496, C501/C511, C505/C516, C518/C527, C532/C542, C536/C547, C549/C558, C563/C573, C567/C578, C580/C589, C594/C604, C598/C609, and C611/C620. The N-linked (GlcNAc...) asparagine glycan is linked to N327. Fibronectin type-III domains follow at residues P625 to P715, E716 to D804, A805 to D894, A895 to D990, L991 to P1075, E1076 to T1165, N1167 to V1256, D1258 to L1350, G1351 to P1439, E1440 to L1531, E1533 to P1621, E1622 to G1711, S1712 to G1801, P1802 to D1888, and S1889 to L1977. A glycan (N-linked (GlcNAc...) asparagine) is linked at N788. T905 carries the post-translational modification Phosphothreonine. Residues N1018, N1034, N1079, N1093, N1119, N1184, N1210, N1261, N1275, N1301, N1366, N1392, N1445, N1455, N1485, and N1534 are each glycosylated (N-linked (GlcNAc...) asparagine). N1809 carries an N-linked (GlcNAc...) asparagine glycan. Residues G1975 to N2190 form the Fibrinogen C-terminal domain. N-linked (GlcNAc...) asparagine glycosylation occurs at N2162.

Belongs to the tenascin family. As to quaternary structure, homohexamer; disulfide-linked. A homotrimer may be formed in the triple coiled-coil region and may be stabilized by disulfide rings at both ends. Two of such half-hexabrachions may be disulfide linked within the central globule. Interacts with CSPG4. Interacts (via the 3rd fibronectin type-III domain) with integrin ITGA9:ITGB1. Detected in fibroblasts (at protein level).

The protein localises to the secreted. It is found in the extracellular space. The protein resides in the extracellular matrix. In terms of biological role, extracellular matrix protein implicated in guidance of migrating neurons as well as axons during development, synaptic plasticity as well as neuronal regeneration. Promotes neurite outgrowth from cortical neurons grown on a monolayer of astrocytes. Ligand for integrins alpha-8/beta-1, alpha-9/beta-1, alpha-V/beta-3 and alpha-V/beta-6. In tumors, stimulates angiogenesis by elongation, migration and sprouting of endothelial cells. This is Tenascin (TNC) from Homo sapiens (Human).